A 276-amino-acid chain; its full sequence is Shikimate dehydrogenase (NADP(+)) (276 aa).

Residues 15–17 and Thr-62 contribute to the shikimate site; that span reads SLS. The active-site Proton acceptor is Lys-66. An NADP(+)-binding site is contributed by Glu-78. Shikimate-binding residues include Asn-87 and Asp-102. NADP(+)-binding positions include 151–156 and Ile-218; that span reads NRTVEK. Residue Tyr-220 participates in shikimate binding. Residue Gly-241 coordinates NADP(+).

Belongs to the shikimate dehydrogenase family. As to quaternary structure, homodimer.

The catalysed reaction is shikimate + NADP(+) = 3-dehydroshikimate + NADPH + H(+). It participates in metabolic intermediate biosynthesis; chorismate biosynthesis; chorismate from D-erythrose 4-phosphate and phosphoenolpyruvate: step 4/7. Involved in the biosynthesis of the chorismate, which leads to the biosynthesis of aromatic amino acids. Catalyzes the reversible NADPH linked reduction of 3-dehydroshikimate (DHSA) to yield shikimate (SA). The chain is Shikimate dehydrogenase (NADP(+)) from Geobacillus kaustophilus (strain HTA426).